A 156-amino-acid chain; its full sequence is Small ribosomal subunit protein uS7 (156 aa).

Belongs to the universal ribosomal protein uS7 family. Part of the 30S ribosomal subunit. Contacts proteins S9 and S11.

Functionally, one of the primary rRNA binding proteins, it binds directly to 16S rRNA where it nucleates assembly of the head domain of the 30S subunit. Is located at the subunit interface close to the decoding center, probably blocks exit of the E-site tRNA. This Clostridium botulinum (strain Kyoto / Type A2) protein is Small ribosomal subunit protein uS7.